The sequence spans 557 residues: Pre-mRNA-processing protein 45 (557 aa).

Disordered stretches follow at residues Met1–Ala32, Glu208–Ala243, and Met316–Asp444. Over residues Asp16–Val25 the composition is skewed to acidic residues. Residues Arg224–His235 show a composition bias toward pro residues. Residues Ser228 and Ser236 each carry the phosphoserine modification. Residues Met316–Arg327 show a composition bias toward basic and acidic residues. Ser376 is modified (phosphoserine). The segment covering Glu386–Glu430 has biased composition (basic and acidic residues).

Belongs to the SNW family. Homodimer. Interacts with cyp1 and the small 23 kDa subunit of the splicing factor U2AF (u2af23). Belongs to the 40S cdc5-associated complex (or cwf complex), a spliceosome sub-complex reminiscent of a late-stage spliceosome composed of the U2, U5 and U6 snRNAs and at least brr2, cdc5, cwf2/prp3, cwf3/syf1, cwf4/syf3, cwf5/ecm2, spp42/cwf6, cwf7/spf27, cwf8, cwf9, cwf10, cwf11, cwf12, prp45/cwf13, cwf14, cwf15, cwf16, cwf17, cwf18, cwf19, cwf20, cwf21, cwf22, cwf23, cwf24, cwf25, cwf26, cyp7/cwf27, cwf28, cwf29/ist3, lea1, msl1, prp5/cwf1, prp10, prp12/sap130, prp17, prp22, sap61, sap62, sap114, sap145, slu7, smb1, smd1, smd3, smf1, smg1 and syf2.

The protein localises to the nucleus. Its function is as follows. Involved in pre-mRNA splicing. This Schizosaccharomyces pombe (strain 972 / ATCC 24843) (Fission yeast) protein is Pre-mRNA-processing protein 45 (prp45).